Consider the following 320-residue polypeptide: MEEKYLILSIESSCDETSLALFENNKLIAHKISSSASAQAFHGGVVPELASRYHEHNINRLFVDILNETKIDPLTITHVAYTAMPGLPGCLHVGKVFAKQLASLINAELVPINHLHAHVFSASIDQELVFPFLGLVVSGGESCLYLVSDYDQIKILNQTQDDAIGECYDKVARILGWNYPGGPIIDKNYQEDLATLEFIKSQPAAKNFSFSGLKTAVINYVHNSKQKKLDFDPIVIASSFQKFAINEVIKKVKYYLDLYQLKRLAIGGGVSANSLLRKKIRDLNVISYIPQMIYTGDNAAMIGAYAYALIKNHKKSILIK.

His-114 and His-118 together coordinate Fe cation. Residues 136-140, Asp-169, Gly-182, Asp-186, and Asn-273 contribute to the substrate site; that span reads VVSGG. Asp-297 contacts Fe cation.

The protein belongs to the KAE1 / TsaD family. Requires Fe(2+) as cofactor.

It localises to the cytoplasm. The catalysed reaction is L-threonylcarbamoyladenylate + adenosine(37) in tRNA = N(6)-L-threonylcarbamoyladenosine(37) in tRNA + AMP + H(+). Its function is as follows. Required for the formation of a threonylcarbamoyl group on adenosine at position 37 (t(6)A37) in tRNAs that read codons beginning with adenine. Is involved in the transfer of the threonylcarbamoyl moiety of threonylcarbamoyl-AMP (TC-AMP) to the N6 group of A37, together with TsaE and TsaB. TsaD likely plays a direct catalytic role in this reaction. In Ureaplasma urealyticum serovar 10 (strain ATCC 33699 / Western), this protein is tRNA N6-adenosine threonylcarbamoyltransferase.